Consider the following 1070-residue polypeptide: DNA-directed RNA polymerase subunit beta (1070 aa).

It belongs to the RNA polymerase beta chain family. In plastids the minimal PEP RNA polymerase catalytic core is composed of four subunits: alpha, beta, beta', and beta''. When a (nuclear-encoded) sigma factor is associated with the core the holoenzyme is formed, which can initiate transcription.

The protein localises to the plastid. It carries out the reaction RNA(n) + a ribonucleoside 5'-triphosphate = RNA(n+1) + diphosphate. Functionally, DNA-dependent RNA polymerase catalyzes the transcription of DNA into RNA using the four ribonucleoside triphosphates as substrates. This chain is DNA-directed RNA polymerase subunit beta, found in Cuscuta exaltata (Tall dodder).